Here is a 365-residue protein sequence, read N- to C-terminus: MDATTRVELGENSYDIAIAKESLQQIGTFLRPLDLGQKVLIVSNPEIYGHYGETVVNSLQAAGFSVDTHLIPAGEQYKNLASIEKIYDTAFKNRLERSSTLLALGGGVIGDMTGFAAATWLRGINFVQVPTTLLAMVDASVGGKTGVNHPQGKNLIGAFYQPKFVLIDPTVLKTLPVREFRAGMAEVIKYGVIWDADLFTKLEAAEQIDSYATIDPDLLDLILERSCRAKAEVVSQDERESGLRAILNYGHTLGHAVESLTHYETFVHGEGVAIGMALAGAIATRMNLWTTAETQRQDALIKKAGLPTECPNNLAIEAILETLQSDKKVKSGKVRFVLPTKIGEVLITDQVSADLITDVLAPALC.

Residues G107–D111, T131–T132, K144, and K153 each bind NAD(+). 3 residues coordinate Zn(2+): E186, H251, and H268.

This sequence belongs to the sugar phosphate cyclases superfamily. Dehydroquinate synthase family. The cofactor is Co(2+). Zn(2+) serves as cofactor. NAD(+) is required as a cofactor.

It is found in the cytoplasm. The enzyme catalyses 7-phospho-2-dehydro-3-deoxy-D-arabino-heptonate = 3-dehydroquinate + phosphate. It functions in the pathway metabolic intermediate biosynthesis; chorismate biosynthesis; chorismate from D-erythrose 4-phosphate and phosphoenolpyruvate: step 2/7. Its function is as follows. Catalyzes the conversion of 3-deoxy-D-arabino-heptulosonate 7-phosphate (DAHP) to dehydroquinate (DHQ). This Picosynechococcus sp. (strain ATCC 27264 / PCC 7002 / PR-6) (Agmenellum quadruplicatum) protein is 3-dehydroquinate synthase.